We begin with the raw amino-acid sequence, 318 residues long: MVQFGSRANTNMTGLPTEQAVEDRRVGNPKRDRMRNALVIVLGEFCGTFMFLLLSFIGAQTALVTNSPSDAGSPLLPFSLMYIAASFGTALAVNVWIFYRVSGGMFNPAVTLGLVLVGAVTPIHALLIIPTQLVAAITAAGITDALLPGKLLVTNALGNGTSVAQGVFIEMFLTSQLVLTVYFLAVEKHRSTHLAPIGIGISVFIAHICATNWTGTSINPARSFGPSVVAGFHGYDWIYYIGPFMGSLLAFGCYKIFKVLEYQTANPGQDDDNLDRSGHHHFFGHRKEPMPHTHTDNIEPKDHGVPQRNDSVIDDQMV.

The span at 1–16 (MVQFGSRANTNMTGLP) shows a compositional bias: polar residues. A disordered region spans residues 1–27 (MVQFGSRANTNMTGLPTEQAVEDRRVG). Over 1–36 (MVQFGSRANTNMTGLPTEQAVEDRRVGNPKRDRMRN) the chain is Cytoplasmic. Residues 37–57 (ALVIVLGEFCGTFMFLLLSFI) traverse the membrane as a helical segment. The Extracellular segment spans residues 58–77 (GAQTALVTNSPSDAGSPLLP). Residues 78–98 (FSLMYIAASFGTALAVNVWIF) form a helical membrane-spanning segment. Over 99–108 (YRVSGGMFNP) the chain is Cytoplasmic. The NPA 1 motif lies at 107-109 (NPA). Residues 109-129 (AVTLGLVLVGAVTPIHALLII) form a helical membrane-spanning segment. Over 130–165 (PTQLVAAITAAGITDALLPGKLLVTNALGNGTSVAQ) the chain is Extracellular. Residue Asn-159 is glycosylated (N-linked (GlcNAc...) asparagine). Residues 166-186 (GVFIEMFLTSQLVLTVYFLAV) traverse the membrane as a helical segment. Topologically, residues 187 to 193 (EKHRSTH) are cytoplasmic. The helical transmembrane segment at 194-214 (LAPIGIGISVFIAHICATNWT) threads the bilayer. Topologically, residues 215–236 (GTSINPARSFGPSVVAGFHGYD) are extracellular. The short motif at 219-221 (NPA) is the NPA 2 element. The helical transmembrane segment at 237-257 (WIYYIGPFMGSLLAFGCYKIF) threads the bilayer. The Cytoplasmic segment spans residues 258–318 (KVLEYQTANP…NDSVIDDQMV (61 aa)). The tract at residues 268–318 (GQDDDNLDRSGHHHFFGHRKEPMPHTHTDNIEPKDHGVPQRNDSVIDDQMV) is disordered. Over residues 285–305 (HRKEPMPHTHTDNIEPKDHGV) the composition is skewed to basic and acidic residues.

This sequence belongs to the MIP/aquaporin (TC 1.A.8) family.

It is found in the nucleus membrane. It carries out the reaction H2O(in) = H2O(out). Probable water channel involved in responses to changes in environmental conditions and conidiation. Involved in responses to hyperosmotic conditions, oxidative stress and cell wall destabilization. Also required for proper transcriptional activation of genes involved in aurofusarin biosynthesis. Not involved in pathogenicity, but negatively regulates deoxynivalenol (DON) production. The chain is Aquaporin-1 from Gibberella zeae (strain ATCC MYA-4620 / CBS 123657 / FGSC 9075 / NRRL 31084 / PH-1) (Wheat head blight fungus).